Here is a 271-residue protein sequence, read N- to C-terminus: S-adenosylmethionine decarboxylase proenzyme (271 aa).

Ser-121 (schiff-base intermediate with substrate; via pyruvic acid) is an active-site residue. Ser-121 bears the Pyruvic acid (Ser); by autocatalysis mark. Catalysis depends on His-126, which acts as the Proton acceptor; for processing activity. The Proton donor; for catalytic activity role is filled by Cys-149.

Belongs to the prokaryotic AdoMetDC family. Type 2 subfamily. As to quaternary structure, heterooctamer of four alpha and four beta chains arranged as a tetramer of alpha/beta heterodimers. Pyruvate is required as a cofactor. In terms of processing, is synthesized initially as an inactive proenzyme. Formation of the active enzyme involves a self-maturation process in which the active site pyruvoyl group is generated from an internal serine residue via an autocatalytic post-translational modification. Two non-identical subunits are generated from the proenzyme in this reaction, and the pyruvate is formed at the N-terminus of the alpha chain, which is derived from the carboxyl end of the proenzyme. The post-translation cleavage follows an unusual pathway, termed non-hydrolytic serinolysis, in which the side chain hydroxyl group of the serine supplies its oxygen atom to form the C-terminus of the beta chain, while the remainder of the serine residue undergoes an oxidative deamination to produce ammonia and the pyruvoyl group blocking the N-terminus of the alpha chain.

The catalysed reaction is S-adenosyl-L-methionine + H(+) = S-adenosyl 3-(methylsulfanyl)propylamine + CO2. It functions in the pathway amine and polyamine biosynthesis; S-adenosylmethioninamine biosynthesis; S-adenosylmethioninamine from S-adenosyl-L-methionine: step 1/1. Functionally, catalyzes the decarboxylation of S-adenosylmethionine to S-adenosylmethioninamine (dcAdoMet), the propylamine donor required for the synthesis of the polyamines spermine and spermidine from the diamine putrescine. The sequence is that of S-adenosylmethionine decarboxylase proenzyme from Clostridium perfringens (strain ATCC 13124 / DSM 756 / JCM 1290 / NCIMB 6125 / NCTC 8237 / Type A).